The sequence spans 345 residues: ATP-dependent kinase YFH7 (345 aa).

31-39 (GPPGSGKST) lines the ATP pocket.

This sequence belongs to the YFH7 family.

Its function is as follows. ATP-dependent kinase that could be involved in endoplasmic reticulum membrane assembly. This Candida glabrata (strain ATCC 2001 / BCRC 20586 / JCM 3761 / NBRC 0622 / NRRL Y-65 / CBS 138) (Yeast) protein is ATP-dependent kinase YFH7 (YFH7).